The following is a 185-amino-acid chain: Large ribosomal subunit protein uL6m (185 aa).

The protein belongs to the universal ribosomal protein uL6 family.

The protein resides in the mitochondrion. The chain is Large ribosomal subunit protein uL6m (RPL6) from Reclinomonas americana.